The chain runs to 96 residues: UPF0235 protein YPK_0828 (96 aa).

Belongs to the UPF0235 family.

In Yersinia pseudotuberculosis serotype O:3 (strain YPIII), this protein is UPF0235 protein YPK_0828.